We begin with the raw amino-acid sequence, 591 residues long: A-type ATP synthase subunit A (591 aa).

233–240 (GPFGSGKT) contacts ATP.

The protein belongs to the ATPase alpha/beta chains family. As to quaternary structure, has multiple subunits with at least A(3), B(3), C, D, E, F, H, I and proteolipid K(x).

It is found in the cell membrane. It carries out the reaction ATP + H2O + 4 H(+)(in) = ADP + phosphate + 5 H(+)(out). Its function is as follows. Component of the A-type ATP synthase that produces ATP from ADP in the presence of a proton gradient across the membrane. The A chain is the catalytic subunit. This is A-type ATP synthase subunit A from Metallosphaera sedula (strain ATCC 51363 / DSM 5348 / JCM 9185 / NBRC 15509 / TH2).